Consider the following 1343-residue polypeptide: MVYSYSEKKRIRKDFGKRPQVLDIPYLLSIQLDSFKKFTDQDPTGERGFEAAFRSVFPIKSFSGNSELQYVSYKLGEPVFDVKECQIRGVTYSAPLRVKLRMVLYDREAAPGTVKDIKEQEVYMGDIPLMTENGTFVINGTERVIVSQLHRSPGVFFDHDRGKTHSSGKVLYNARIIPYRGSWLDFEFDPKDALFVRIDRRRKLAASIILRALDYSTQDILDLFFDRVNFKIKKDSLVMDLVAERLRGETASYDIKDVEGTIIVEKGRRITARHIRQLEKSNTTELEVPVDYIVGKISGQDYIDPDTGEVLVSANAEMTLEDLAKLSLAGIKEISTLYINELDNGAYMSDTLRIDSTTNRLEALVEIYRMMRPGEPPTKDAAEALFQNLFFSEERYDLSKVGRMKFNRRLGIDDDEGTGILSKEDIVAVMKNIITIRNGNDEVDDIDHLGNRRIRSVGEMAENQFRVGLVRVERAVRERLSLGDLNELMPQDLINAKPISAAVKEFFGSSQLSQFMDQNNPLSEVTHKRRISALGPGGLTRERAGFEVRDVHPTHYGRLCPIETPEGPNIGLINSLASFARTNSYGFLETPYRKVIDGVVTDQVDYLSAIEEGRYVIAQAIVDLDENGRMMDELIACRHKGDSTFMGAADIQYMDVSPQQIISVAASLIPFLEHDDANRALMGANMQRQAVPTLKADKPLVGTGIERTLAVDSGVVVVAKRGGYIDYVDASRIVVKVNESELRPGEAGIDIYNLTKYTRSNQNTCINQRPCCAMGDPVVTGDVLADGPSTDLGDLALGQNMRIAFMPWNGYNFEDSILISERVAQEDRFTTIHIQELSCIARDTKLGSEEITADIPNVGESALSKLDESGIVYIGAEVKGGDILVGKVTPKGETQLTPEEKLLRAIFGEKASDVKDSSLRVPNSVKGTIIDVQVFTRDGVEKDKRAVEIEEMHVRQAKKDLTEEFQILEEGVYGRARNLLLSAGFNEAQLDAIPRSQLLSQSIDDEGKQTELEQLAEQHDELKADFDKKFEVKRRKITQGDDLAPGVLKIVKVYLAVKRTIQPGDKMAGRHGNKGVISKINPVEDMPYDENGNPIDIVLNPLGVPSRMNIGQVLEVHLGAAAKGIGDKIAAMLEEQRELAELRGYIKEVYELGEEVQQRVDIDSFTDDEVVRLAKNLKGGIPTATPAFDGAKEKEIKEMLALAGLPTTGQRKLFDGRTGDEFERQVTVGYMYMLKLNHLVDDKMHARSTGSYSLVTQQPLGGKAQFGGQRFGEMEVWALEAYGAAYTLQEMLTVKSDDVNGRTNMYKNIVDGNHQMQPGMPESFNVLLKEIRSLGINIELDQD.

Belongs to the RNA polymerase beta chain family. As to quaternary structure, the RNAP catalytic core consists of 2 alpha, 1 beta, 1 beta' and 1 omega subunit. When a sigma factor is associated with the core the holoenzyme is formed, which can initiate transcription.

The catalysed reaction is RNA(n) + a ribonucleoside 5'-triphosphate = RNA(n+1) + diphosphate. In terms of biological role, DNA-dependent RNA polymerase catalyzes the transcription of DNA into RNA using the four ribonucleoside triphosphates as substrates. The protein is DNA-directed RNA polymerase subunit beta of Shewanella woodyi (strain ATCC 51908 / MS32).